A 308-amino-acid chain; its full sequence is uncharacterized protein (308 aa).

This is an uncharacterized protein from Treponema pallidum (strain Nichols).